The following is a 1217-amino-acid chain: Endonuclease YhcR (1217 aa).

The N-terminal stretch at 1-46 (MLSVEMISRQNRCHYVYKGGNMMRRILHIVLITALMFLNVMYTFEA) is a signal peptide. One can recognise a TNase-like domain in the interval 376 to 517 (GEYEGIVDRV…KKDQKGIWNE (142 aa)). Active-site residues include Arg-404, Glu-412, and Arg-460. The tract at residues 590-828 (LRILSMNDLH…VIFAAHNHQV (239 aa)) is phosphoesterase. Residues Asp-597, His-599, Asp-647, Asn-680, His-792, and His-824 each coordinate a divalent metal cation. The 5'-nucleotidase stretch occupies residues 829-1085 (VNGEVNGKLI…AYTKEGRIKL (257 aa)). Substrate contacts are provided by residues Phe-965 and 1035 to 1042 (FMATATGA). The tract at residues 1087 to 1142 (EASDIEDPVTEDPITEEPGDDPGTEDPIKEDPRPGEDLPDIKETPGTAPVHQLPPS) is disordered. Residues 1089 to 1110 (SDIEDPVTEDPITEEPGDDPGT) show a composition bias toward acidic residues. The segment covering 1112–1129 (DPIKEDPRPGEDLPDIKE) has biased composition (basic and acidic residues). Positions 1182–1186 (LPDTS) match the LPXTG sorting signal motif. Thr-1185 carries the post-translational modification Pentaglycyl murein peptidoglycan amidated threonine. Positions 1186–1217 (SAGYYNFMVIGAAVTLSGTYLYVRRKRSASRT) are cleaved as a propeptide — removed by sortase.

The protein in the C-terminal section; belongs to the 5'-nucleotidase family. It depends on Ca(2+) as a cofactor. Mn(2+) is required as a cofactor.

It localises to the secreted. The protein resides in the cell wall. Requires a minimum of 0.1 mM of calcium for a significant activity. Maximal activity was observed with concentrations of calcium between 1 to 5 mM. Is 10-fold less active with the corresponding concentrations of manganese. Inhibited by NaCl at concentrations of 100 mM and higher. Functionally, sugar-nonspecific endonuclease that yields nucleotide 3'-monophosphate products. No 5'-nucleotidase activity was detected, using 5'-AMP as the substrate, in the presence of diverse divalent metals and with various pH values. This chain is Endonuclease YhcR (yhcR), found in Bacillus subtilis (strain 168).